A 563-amino-acid chain; its full sequence is MKLNKMFLVGALLSLGFASCSKEGNGPDPDNAAKSYMSMTLSMPMGSARAGDGQDQANPDYHYVGEWAGKDKIEKVSIYMVPQGGPGLVESAEDLDFGTYYENPTIDPATHNAILKPKKGIKVNSAVGKTVKVYVVLNDIAGKAKALLANVNAADFDAKFKEIIELSTQAQALGTVADGPNPATAAGKIAKKNGTTDETIMMTCLQPSDALTIEAAVSEANAIAGIKNQAKVTVERSVARAMVSTKAQSYEIKATTQIGEIAAGSVLATITDIRWVVAQGERRQYLSKKRGTVPENTWVTPGSGFVPTSSTFHTNATEYYDYAGLWEDHNTNEAVISGTQVPTLADYQLQDVTGELANALSGKFLLPNTHKSGANAASSDYKRGNTAYVLVRAKFTPKKEAFIDRGKTYSDNTAVPEYVAGEDFFVGENGQFYVSMKSVTDPKVGGVAGMKAHKYVKGKVLYYAWLNPSTTSPDSWWNSPVVRNNIYHIHIKSIKKLGFNWNPLVPDPDPSNPENPNNPDPNPDEPGTPVPTDPENPLPDQDTFMSVEVTVLPWKVHSYEVDL.

The first 19 residues, 1–19 (MKLNKMFLVGALLSLGFAS), serve as a signal peptide directing secretion. Residue Cys-20 is the site of N-palmitoyl cysteine attachment. The S-diacylglycerol cysteine moiety is linked to residue Cys-20. The propeptide occupies 20–49 (CSKEGNGPDPDNAAKSYMSMTLSMPMGSAR). The disordered stretch occupies residues 504–543 (LVPDPDPSNPENPNNPDPNPDEPGTPVPTDPENPLPDQDT). Residues 505–537 (VPDPDPSNPENPNNPDPNPDEPGTPVPTDPENP) show a composition bias toward pro residues.

Belongs to the bacteroidetes fimbrillin superfamily. Structural component of the fimbrial stalk. Minor fimbriae are composed of a structural subunit, most often Mfa1, and the accessory subunits Mfa3, Mfa4 and Mfa5. Mfa1 interacts with Mfa2; this anchors the fimbrium in the membrane. Fimbrium assembly occurs by linear, head-to-tail oligomerization of fimbrial subunits. This is mediated via insertion of a C-terminal beta-strand from one subunit into a groove in the N-terminal domain of the following subunit. Interacts with S.gordonii ssp5.

The protein localises to the fimbrium. It localises to the cell outer membrane. Structural subunit of the minor fimbriae. These filamentous pili are attached to the cell surface; they mediate biofilm formation, adhesion onto host cells and onto other bacteria that are part of the oral microbiome. They play an important role in invasion of periodontal tissues and are recognized as major virulence factors. Mfa1 orthologs from different strains have highly divergent sequences, and this correlates with pathogenicity. This is Minor fimbrium subunit Mfa1 from Porphyromonas gingivalis (strain ATCC 33277 / DSM 20709 / CIP 103683 / JCM 12257 / NCTC 11834 / 2561).